Consider the following 702-residue polypeptide: Vertnin (702 aa).

The segment at 562–625 (VPTLGKGGQE…QGQPHSGPLL (64 aa)) is disordered. The span at 570-582 (QEAEEKQEKEAGR) shows a compositional bias: basic and acidic residues.

Belongs to the vertnin family.

The protein localises to the nucleus. Its function is as follows. Acts as a transcription factor that regulates development of thoracic vertebrae. The chain is Vertnin from Homo sapiens (Human).